The chain runs to 214 residues: Dimethylamine corrinoid protein 2 (214 aa).

A B12-binding N-terminal domain is found at 1–91 (MATKEELIQE…DMPAGAATKK (91 aa)). Residues 92–214 (LGVIVNGTVE…AVAKAKELLL (123 aa)) enclose the B12-binding domain. Residue His-105 coordinates methylcob(III)alamin.

It belongs to the methylamine corrinoid protein family.

The protein operates within one-carbon metabolism; methanogenesis from dimethylamine. Its function is as follows. Acts as a methyl group carrier between MtbB and MtbA. This chain is Dimethylamine corrinoid protein 2 (mtbC2), found in Methanosarcina mazei (strain ATCC BAA-159 / DSM 3647 / Goe1 / Go1 / JCM 11833 / OCM 88) (Methanosarcina frisia).